The primary structure comprises 1377 residues: Protein RhsA (1377 aa).

28 tandem repeats follow at residues 330-352 (GKQVRSFTYDDKYRGRMVAHRHT), 353-374 (GRPEIRYRYDSDGRVTEQLNPA), 375-417 (GLSY…EHAD), 418-438 (GSVTQSQFDAVGRLRAQTDAA), 439-460 (GRTTEYSPDVVTGLITRITTPD), 461-481 (GRASAFYYNHHNQLTSATGPD), 482-502 (GLELRREYDELGRLIQETAPD), 503-525 (GDITRYRYDNPHSDLPCATEDAT), 526-546 (GSRKTMTWSRYGQLLSFTDCS), 547-567 (GYVTRYDHDRFGQMTAVHREE), 568-588 (GLSQYRAYDSRGQLIAVKDTQ), 589-609 (GHETRYEYNIAGDLTAVIAPD), 610-629 (GSRNGTQYDAWGKAVRTTQG), 630-650 (GLTRSMEYDAAGRVIRLTSEN), 651-671 (GSHTTFRYDVLDRLIQETGFD), 672-691 (GRTQRYHHDLTGKLIRSEDE), 692-711 (GLVTHWHYDEADRLTHRTVK), 712-734 (GETAERWQYDERGWLTDISHISE), 735-758 (GHRVAVHYRYDEKGRLTGERQTVH), 808-828 (GDTPLVEYTRDRLHRETLRSF), 829-850 (GRYELTTAYTPAGQLQSQHLNS), 851-871 (LLSDRDYTWNDNGELIRISSP), 872-894 (RQTRSYSYSTTGRLTGVHTTAAN), 895-930 (LDIRIPYATDPAGNRLPDPELHPDSTLSMWPDNRIA), 931-959 (RDAHYLYRYDRHGRLTEKTDLIPEGVIRT), 960-984 (DDERTHRYHYDSQHRLVHYTRTQYE), 985-1019 (EPLVESRYLYDPLGRRVAKRVWRRERDLTGWMSLS), and 1162-1186 (GTTEWCAEYDEWGNLLNEENPHQLQ). The segment at 330 to 1186 (GKQVRSFTYD…LNEENPHQLQ (857 aa)) is 28 X approximate tandem repeats. The segment at 1356–1377 (DAKSTQKAWNCRHSRQSNDKKR) is disordered.

It belongs to the RHS family.

Functionally, rhs elements have a nonessential function. They may play an important role in the natural ecology of the cell. The sequence is that of Protein RhsA (rhsA) from Escherichia coli (strain K12).